The primary structure comprises 327 residues: Eukaryotic translation initiation factor 3 subunit I (327 aa).

5 WD repeats span residues 8 to 47 (GHQR…RLGT), 50 to 89 (GHIG…ALGK), 147 to 186 (EQQS…ELNS), 189 to 228 (DHTA…CLKT), and 286 to 327 (GHFG…HTFE).

This sequence belongs to the eIF-3 subunit I family. As to quaternary structure, component of the eukaryotic translation initiation factor 3 (eIF-3) complex.

It localises to the cytoplasm. Its function is as follows. Component of the eukaryotic translation initiation factor 3 (eIF-3) complex, which is involved in protein synthesis of a specialized repertoire of mRNAs and, together with other initiation factors, stimulates binding of mRNA and methionyl-tRNAi to the 40S ribosome. The eIF-3 complex specifically targets and initiates translation of a subset of mRNAs involved in cell proliferation. This Anopheles gambiae (African malaria mosquito) protein is Eukaryotic translation initiation factor 3 subunit I.